Reading from the N-terminus, the 214-residue chain is Imidazole glycerol phosphate synthase subunit HisH (214 aa).

One can recognise a Glutamine amidotransferase type-1 domain in the interval 2–214 (RVALIDYGSG…LIANFLRWAP (213 aa)). The active-site Nucleophile is Cys-88. Catalysis depends on residues His-194 and Glu-196.

In terms of assembly, heterodimer of HisH and HisF.

It is found in the cytoplasm. The catalysed reaction is 5-[(5-phospho-1-deoxy-D-ribulos-1-ylimino)methylamino]-1-(5-phospho-beta-D-ribosyl)imidazole-4-carboxamide + L-glutamine = D-erythro-1-(imidazol-4-yl)glycerol 3-phosphate + 5-amino-1-(5-phospho-beta-D-ribosyl)imidazole-4-carboxamide + L-glutamate + H(+). It catalyses the reaction L-glutamine + H2O = L-glutamate + NH4(+). Its pathway is amino-acid biosynthesis; L-histidine biosynthesis; L-histidine from 5-phospho-alpha-D-ribose 1-diphosphate: step 5/9. Its function is as follows. IGPS catalyzes the conversion of PRFAR and glutamine to IGP, AICAR and glutamate. The HisH subunit catalyzes the hydrolysis of glutamine to glutamate and ammonia as part of the synthesis of IGP and AICAR. The resulting ammonia molecule is channeled to the active site of HisF. This is Imidazole glycerol phosphate synthase subunit HisH from Rhodospirillum rubrum (strain ATCC 11170 / ATH 1.1.1 / DSM 467 / LMG 4362 / NCIMB 8255 / S1).